The following is a 260-amino-acid chain: Putative ABC transporter ATP-binding protein PYRAB01300 (260 aa).

Residues 2–234 (IEFKDVWFWY…DLRNFSLVEP (233 aa)) enclose the ABC transporter domain. 34–41 (GPNGSGKT) is a binding site for ATP.

It belongs to the ABC transporter superfamily.

Its subcellular location is the cell membrane. Functionally, probably part of an ABC transporter complex. Responsible for energy coupling to the transport system. The protein is Putative ABC transporter ATP-binding protein PYRAB01300 of Pyrococcus abyssi (strain GE5 / Orsay).